Consider the following 211-residue polypeptide: Thymidylate kinase (211 aa).

10–17 is an ATP binding site; that stretch reads GPDGAGKT.

Belongs to the thymidylate kinase family.

It catalyses the reaction dTMP + ATP = dTDP + ADP. Phosphorylation of dTMP to form dTDP in both de novo and salvage pathways of dTTP synthesis. This chain is Thymidylate kinase (tmk), found in Lactococcus lactis subsp. lactis (strain IL1403) (Streptococcus lactis).